A 365-amino-acid polypeptide reads, in one-letter code: Peptide chain release factor 2 (365 aa).

Q252 carries the N5-methylglutamine modification.

The protein belongs to the prokaryotic/mitochondrial release factor family. In terms of processing, methylated by PrmC. Methylation increases the termination efficiency of RF2.

Its subcellular location is the cytoplasm. Peptide chain release factor 2 directs the termination of translation in response to the peptide chain termination codons UGA and UAA. The chain is Peptide chain release factor 2 from Aliivibrio fischeri (strain ATCC 700601 / ES114) (Vibrio fischeri).